The following is a 297-amino-acid chain: Ribosomal protein L11 methyltransferase (297 aa).

Residues Thr152, Gly173, Asp195, and Asn234 each contribute to the S-adenosyl-L-methionine site.

It belongs to the methyltransferase superfamily. PrmA family.

It localises to the cytoplasm. It carries out the reaction L-lysyl-[protein] + 3 S-adenosyl-L-methionine = N(6),N(6),N(6)-trimethyl-L-lysyl-[protein] + 3 S-adenosyl-L-homocysteine + 3 H(+). Its function is as follows. Methylates ribosomal protein L11. The protein is Ribosomal protein L11 methyltransferase of Cupriavidus pinatubonensis (strain JMP 134 / LMG 1197) (Cupriavidus necator (strain JMP 134)).